An 81-amino-acid polypeptide reads, in one-letter code: ATP synthase subunit c, chloroplastic (81 aa).

Helical transmembrane passes span 3–23 (PLIS…ASIG) and 53–73 (LLLS…VALA).

The protein belongs to the ATPase C chain family. F-type ATPases have 2 components, F(1) - the catalytic core - and F(0) - the membrane proton channel. F(1) has five subunits: alpha(3), beta(3), gamma(1), delta(1), epsilon(1). F(0) has four main subunits: a(1), b(1), b'(1) and c(10-14). The alpha and beta chains form an alternating ring which encloses part of the gamma chain. F(1) is attached to F(0) by a central stalk formed by the gamma and epsilon chains, while a peripheral stalk is formed by the delta, b and b' chains.

The protein resides in the plastid. Its subcellular location is the chloroplast thylakoid membrane. Its function is as follows. F(1)F(0) ATP synthase produces ATP from ADP in the presence of a proton or sodium gradient. F-type ATPases consist of two structural domains, F(1) containing the extramembraneous catalytic core and F(0) containing the membrane proton channel, linked together by a central stalk and a peripheral stalk. During catalysis, ATP synthesis in the catalytic domain of F(1) is coupled via a rotary mechanism of the central stalk subunits to proton translocation. In terms of biological role, key component of the F(0) channel; it plays a direct role in translocation across the membrane. A homomeric c-ring of between 10-14 subunits forms the central stalk rotor element with the F(1) delta and epsilon subunits. The sequence is that of ATP synthase subunit c, chloroplastic from Huperzia lucidula (Shining clubmoss).